A 174-amino-acid polypeptide reads, in one-letter code: ATP-dependent protease subunit HslV (174 aa).

Residue T2 is part of the active site. Residues G157, C160, and T163 each contribute to the Na(+) site.

The protein belongs to the peptidase T1B family. HslV subfamily. A double ring-shaped homohexamer of HslV is capped on each side by a ring-shaped HslU homohexamer. The assembly of the HslU/HslV complex is dependent on binding of ATP.

It is found in the cytoplasm. The catalysed reaction is ATP-dependent cleavage of peptide bonds with broad specificity.. Its activity is regulated as follows. Allosterically activated by HslU binding. Its function is as follows. Protease subunit of a proteasome-like degradation complex believed to be a general protein degrading machinery. The chain is ATP-dependent protease subunit HslV from Shewanella woodyi (strain ATCC 51908 / MS32).